A 77-amino-acid chain; its full sequence is Tachyplesin-1 (77 aa).

The first 23 residues, 1–23, serve as a signal peptide directing secretion; the sequence is MKKLVIALCLMMVLAVMVEEAEA. 2 disulfides stabilise this stretch: cysteine 26/cysteine 39 and cysteine 30/cysteine 35. At arginine 40 the chain carries Arginine amide. Residues 41 to 77 constitute a propeptide that is removed on maturation; sequence GKRNEVRQYRDRGYDVRAIPEETFFTRQDEDEDDDEE.

This sequence belongs to the tachyplesin/polyphemusin family. In terms of tissue distribution, hemocytes.

It localises to the secreted. In terms of biological role, significantly inhibits the growth of Gram-negative and Gram-positive bacteria. The sequence is that of Tachyplesin-1 from Tachypleus tridentatus (Japanese horseshoe crab).